A 276-amino-acid polypeptide reads, in one-letter code: NH(3)-dependent NAD(+) synthetase (276 aa).

ATP is bound at residue 43–50 (GISGGVDS). Residue aspartate 49 participates in Mg(2+) binding. Deamido-NAD(+) is bound at residue arginine 146. Threonine 166 serves as a coordination point for ATP. Glutamate 171 is a Mg(2+) binding site. Residues lysine 179 and aspartate 186 each contribute to the deamido-NAD(+) site. Positions 195 and 217 each coordinate ATP. 266–267 (HK) contributes to the deamido-NAD(+) binding site.

The protein belongs to the NAD synthetase family. In terms of assembly, homodimer.

The catalysed reaction is deamido-NAD(+) + NH4(+) + ATP = AMP + diphosphate + NAD(+) + H(+). The protein operates within cofactor biosynthesis; NAD(+) biosynthesis; NAD(+) from deamido-NAD(+) (ammonia route): step 1/1. Functionally, catalyzes the ATP-dependent amidation of deamido-NAD to form NAD. Uses ammonia as a nitrogen source. This is NH(3)-dependent NAD(+) synthetase from Vibrio cholerae serotype O1 (strain ATCC 39541 / Classical Ogawa 395 / O395).